The primary structure comprises 416 residues: MDKLIIEGGYPLKGTVTVSGSKNAALPILIASILANKKVTLHNVPQLRDIRTTIKLLEILGCTIQQTEQCIELTPGTLQHEAPYELVCTMRASILVLGPLLAKLGKAKVAMPGGCAIGARPIDLHIKALEKMGAKFTLKDGYLIGDCTKLKGTHIYLDFPTVGGTENLLIAASIAEGETILENAAQEPEIEDLARFLIACGAIIKGHGTNVIHIQGVPSLNGCTYSIMPDRIEAGTFLTAAAITKGELLISGCPYKELEAIINKFMQMGIHIEKRECGIYVAPIKTLKATDVTTRPFPGFPTDMQAQIMALMSIAYGTSTVNETIFENRFMHVQELARMGANIRLNGHTAIVTGVKELKGAPVMASDLRASASLVLAGLAAKGITTIQRTYHLDRGYEFIEKKLNAVGASIQRTNE.

22–23 (KN) is a phosphoenolpyruvate binding site. Position 91 (arginine 91) interacts with UDP-N-acetyl-alpha-D-glucosamine. Cysteine 115 (proton donor) is an active-site residue. Cysteine 115 carries the 2-(S-cysteinyl)pyruvic acid O-phosphothioketal modification. UDP-N-acetyl-alpha-D-glucosamine contacts are provided by residues 120–124 (RPIDL), aspartate 303, and isoleucine 325.

The protein belongs to the EPSP synthase family. MurA subfamily.

The protein localises to the cytoplasm. The catalysed reaction is phosphoenolpyruvate + UDP-N-acetyl-alpha-D-glucosamine = UDP-N-acetyl-3-O-(1-carboxyvinyl)-alpha-D-glucosamine + phosphate. Its pathway is cell wall biogenesis; peptidoglycan biosynthesis. Functionally, cell wall formation. Adds enolpyruvyl to UDP-N-acetylglucosamine. The chain is UDP-N-acetylglucosamine 1-carboxyvinyltransferase from Lawsonia intracellularis (strain PHE/MN1-00).